The sequence spans 217 residues: UPF0502 protein ETA_20480 (217 aa).

Positions 169 to 188 are disordered; that stretch reads GEVDESSRADGHHPDDHRGD. The segment covering 173-188 has biased composition (basic and acidic residues); sequence ESSRADGHHPDDHRGD.

Belongs to the UPF0502 family.

This is UPF0502 protein ETA_20480 from Erwinia tasmaniensis (strain DSM 17950 / CFBP 7177 / CIP 109463 / NCPPB 4357 / Et1/99).